A 92-amino-acid chain; its full sequence is uncharacterized protein (92 aa).

Positions 1–29 (MAAQTDYKKQVVGILLSLAFVLFVFSFSE) are cleaved as a signal peptide.

This is an uncharacterized protein from Bacillus subtilis (strain 168).